The following is a 316-amino-acid chain: Ribosomal RNA small subunit methyltransferase H (316 aa).

S-adenosyl-L-methionine-binding positions include 35–37, aspartate 55, phenylalanine 84, aspartate 105, and glutamine 112; that span reads SGH.

This sequence belongs to the methyltransferase superfamily. RsmH family.

The protein resides in the cytoplasm. The enzyme catalyses cytidine(1402) in 16S rRNA + S-adenosyl-L-methionine = N(4)-methylcytidine(1402) in 16S rRNA + S-adenosyl-L-homocysteine + H(+). Functionally, specifically methylates the N4 position of cytidine in position 1402 (C1402) of 16S rRNA. The chain is Ribosomal RNA small subunit methyltransferase H from Streptococcus pyogenes serotype M6 (strain ATCC BAA-946 / MGAS10394).